Consider the following 262-residue polypeptide: Phosphate import ATP-binding protein PstB (262 aa).

In terms of domain architecture, ABC transporter spans Ile16–Ile257. Gly48–Ser55 contacts ATP.

The protein belongs to the ABC transporter superfamily. Phosphate importer (TC 3.A.1.7) family. The complex is composed of two ATP-binding proteins (PstB), two transmembrane proteins (PstC and PstA) and a solute-binding protein (PstS).

It is found in the cell inner membrane. The enzyme catalyses phosphate(out) + ATP + H2O = ADP + 2 phosphate(in) + H(+). In terms of biological role, part of the ABC transporter complex PstSACB involved in phosphate import. Responsible for energy coupling to the transport system. The polypeptide is Phosphate import ATP-binding protein PstB (Cupriavidus pinatubonensis (strain JMP 134 / LMG 1197) (Cupriavidus necator (strain JMP 134))).